The following is a 402-amino-acid chain: 1-deoxy-D-xylulose 5-phosphate reductoisomerase (402 aa).

The NADPH site is built by Thr27, Gly28, Ser29, Ile30, Gly53, Lys54, Asn55, and Asn140. Lys141 is a 1-deoxy-D-xylulose 5-phosphate binding site. Position 142 (Glu142) interacts with NADPH. Residue Asp166 coordinates Mn(2+). The 1-deoxy-D-xylulose 5-phosphate site is built by Ser167, Glu168, Ser192, and His215. Glu168 contacts Mn(2+). Residue Gly221 coordinates NADPH. 1-deoxy-D-xylulose 5-phosphate contacts are provided by Ser228, Asn233, Lys234, and Glu237. Residue Glu237 participates in Mn(2+) binding.

This sequence belongs to the DXR family. It depends on Mg(2+) as a cofactor. Requires Mn(2+) as cofactor.

The enzyme catalyses 2-C-methyl-D-erythritol 4-phosphate + NADP(+) = 1-deoxy-D-xylulose 5-phosphate + NADPH + H(+). Its pathway is isoprenoid biosynthesis; isopentenyl diphosphate biosynthesis via DXP pathway; isopentenyl diphosphate from 1-deoxy-D-xylulose 5-phosphate: step 1/6. Functionally, catalyzes the NADPH-dependent rearrangement and reduction of 1-deoxy-D-xylulose-5-phosphate (DXP) to 2-C-methyl-D-erythritol 4-phosphate (MEP). This chain is 1-deoxy-D-xylulose 5-phosphate reductoisomerase, found in Lawsonia intracellularis (strain PHE/MN1-00).